The sequence spans 417 residues: CinA-like protein (417 aa).

The protein belongs to the CinA family.

The chain is CinA-like protein from Microcystis aeruginosa (strain NIES-843 / IAM M-2473).